Reading from the N-terminus, the 161-residue chain is Lipoprotein signal peptidase (161 aa).

Helical transmembrane passes span 9 to 29, 64 to 84, and 96 to 113; these read WLWL…LVVE, WQKY…ANVL, and MAYA…IDRA. Catalysis depends on residues Asp-120 and Asp-138. The chain crosses the membrane as a helical span at residues 133–153; it reads VFNIADVAIVMGAGLLILETF.

This sequence belongs to the peptidase A8 family.

Its subcellular location is the cell inner membrane. It catalyses the reaction Release of signal peptides from bacterial membrane prolipoproteins. Hydrolyzes -Xaa-Yaa-Zaa-|-(S,diacylglyceryl)Cys-, in which Xaa is hydrophobic (preferably Leu), and Yaa (Ala or Ser) and Zaa (Gly or Ala) have small, neutral side chains.. Its pathway is protein modification; lipoprotein biosynthesis (signal peptide cleavage). This protein specifically catalyzes the removal of signal peptides from prolipoproteins. This Haemophilus ducreyi (strain 35000HP / ATCC 700724) protein is Lipoprotein signal peptidase.